We begin with the raw amino-acid sequence, 118 residues long: Non-specific lipid-transfer protein (118 aa).

The signal sequence occupies residues 1–27; sequence MGVSKVAIAVAVMLMVVVINHPAVVEG. 4 disulfide bridges follow: cysteine 30-cysteine 75, cysteine 40-cysteine 54, cysteine 55-cysteine 100, and cysteine 77-cysteine 114.

The protein belongs to the plant LTP family. In terms of processing, disulfide bonds.

In terms of biological role, plant non-specific lipid-transfer proteins transfer phospholipids as well as galactolipids across membranes. May play a role in wax or cutin deposition in the cell walls of expanding epidermal cells and certain secretory tissues. This is Non-specific lipid-transfer protein from Apium graveolens (Celery).